A 186-amino-acid polypeptide reads, in one-letter code: UPF0301 protein PM1869 (186 aa).

Belongs to the UPF0301 (AlgH) family.

The chain is UPF0301 protein PM1869 from Pasteurella multocida (strain Pm70).